Reading from the N-terminus, the 298-residue chain is uncharacterized protein (298 aa).

The next 10 helical transmembrane spans lie at 5-23, 33-52, 72-91, 101-120, 127-145, 149-166, 175-194, 207-229, 238-260, and 265-284; these read ILVS…YFST, IFGY…VTLF, ALSY…LFLW, VSFG…RVFF, FKFI…NIVL, LSWE…YFSI, LASF…YFAL, FIWG…YVIA, LGLL…GEQI, and YPLF…DGVY. An EamA domain is found at 13-144; it reads FLFGYMYYFS…ATLGVISNIV (132 aa).

The protein belongs to the EamA transporter family.

Its subcellular location is the cell membrane. This is an uncharacterized protein from Haemophilus influenzae (strain ATCC 51907 / DSM 11121 / KW20 / Rd).